The sequence spans 144 residues: D-aminoacyl-tRNA deacylase (144 aa).

The Gly-cisPro motif, important for rejection of L-amino acids signature appears at 136–137 (GP).

This sequence belongs to the DTD family. In terms of assembly, homodimer.

The protein localises to the cytoplasm. The enzyme catalyses glycyl-tRNA(Ala) + H2O = tRNA(Ala) + glycine + H(+). It carries out the reaction a D-aminoacyl-tRNA + H2O = a tRNA + a D-alpha-amino acid + H(+). An aminoacyl-tRNA editing enzyme that deacylates mischarged D-aminoacyl-tRNAs. Also deacylates mischarged glycyl-tRNA(Ala), protecting cells against glycine mischarging by AlaRS. Acts via tRNA-based rather than protein-based catalysis; rejects L-amino acids rather than detecting D-amino acids in the active site. By recycling D-aminoacyl-tRNA to D-amino acids and free tRNA molecules, this enzyme counteracts the toxicity associated with the formation of D-aminoacyl-tRNA entities in vivo and helps enforce protein L-homochirality. The polypeptide is D-aminoacyl-tRNA deacylase (Corynebacterium efficiens (strain DSM 44549 / YS-314 / AJ 12310 / JCM 11189 / NBRC 100395)).